We begin with the raw amino-acid sequence, 243 residues long: MATLGRNVTITLIGHGTFHLTTPEGRNILIDAWVDGNPVCPEPWKARVRENLAAIFVTHGHFDHIADLVDLARETGATVVCQYDMVPYLEGEGIPAAQLVGFNKGGTVTVADVRATMTTAHHSSTIYENGQIINLGTAAGYVLRFSNGFTVYHTGDTCVTMDMQIIGELYRPDLVILPIGDHFTMDPRQAAYALKLIGAKYAIPEHYGTFPILTGTPEALIEHCREFGVTTEVIALKPGESVS.

Belongs to the UPF0173 family.

This Chloroflexus aurantiacus (strain ATCC 29366 / DSM 635 / J-10-fl) protein is UPF0173 metal-dependent hydrolase Caur_2542.